The following is a 464-amino-acid chain: Formin-like protein 19 (464 aa).

Residues M1 to T74 form a disordered region. The segment covering P14–R70 has biased composition (pro residues). An FH2 domain is found at C68–K462.

It belongs to the formin-like family. Class-II subfamily.

The polypeptide is Formin-like protein 19 (FH19) (Arabidopsis thaliana (Mouse-ear cress)).